We begin with the raw amino-acid sequence, 865 residues long: ABC transporter ATP-binding/permease protein Rv1747 (865 aa).

Residues 29-78 (VVVGRDLRADVRVAHPLISRAHLLLRFDQGRWVAIDNGSLNGLYLNNRRV) enclose the FHA 1 domain. A disordered region spans residues 104-205 (GRHRGSAGRP…PAGARGGTEA (102 aa)). Positions 135–156 (PQTGTLGSGQLQQLPPATTRIP) are enriched in low complexity. At threonine 152 the chain carries Phosphothreonine. Residues 157–166 (AAPPSGPQPR) are compositionally biased toward pro residues. Threonine 210 is modified (phosphothreonine). The 50-residue stretch at 230-279 (VRIGRANDNDIVIPEVLASRHHATLVPTPGGTEIRDNRSINGTFVNGARV) folds into the FHA 2 domain. The 234-residue stretch at 319–552 (LDVRGVTWTI…VMGTTNWADI (234 aa)) folds into the ABC transporter domain. 352-359 (GPSGAGKS) contributes to the ATP binding site. One can recognise an ABC transmembrane type-2 domain in the interval 596-810 (RQFSTIARRQ…TPARWGFAAS (215 aa)). 6 helical membrane-spanning segments follow: residues 614 to 634 (GYFV…MSVP), 652 to 672 (PGQI…ALTI), 700 to 720 (VCVY…IVLV), 740 to 760 (FVDV…LSAI), 767 to 787 (IMPL…GMIP), and 836 to 856 (SAWW…VGFV).

This sequence in the central section; belongs to the ABC transporter superfamily. The protein in the C-terminal section; belongs to the ABC-2 integral membrane protein family. In terms of assembly, homodimer. Interacts with PknF. In terms of processing, phosphorylated by PknF. Can probably be phosphorylated in vivo by other kinases when PknF is missing.

The protein localises to the cell membrane. With respect to regulation, function is positively regulated by phosphorylation. Its function is as follows. Involved in the translocation of an unknown substrate across the membrane. Transmembrane domains (TMD) form a pore in the membrane and the ATP-binding domain (NBD) is responsible for energy generation. Required for virulence. This chain is ABC transporter ATP-binding/permease protein Rv1747, found in Mycobacterium tuberculosis (strain ATCC 25618 / H37Rv).